A 359-amino-acid chain; its full sequence is Fructose-bisphosphate aldolase, cytoplasmic isozyme 2 (359 aa).

Residues arginine 52 and lysine 143 each contribute to the substrate site. Residue glutamate 184 is the Proton acceptor of the active site. The Schiff-base intermediate with dihydroxyacetone-P role is filled by lysine 226.

The protein belongs to the class I fructose-bisphosphate aldolase family.

It is found in the cytoplasm. The enzyme catalyses beta-D-fructose 1,6-bisphosphate = D-glyceraldehyde 3-phosphate + dihydroxyacetone phosphate. It functions in the pathway carbohydrate degradation; glycolysis; D-glyceraldehyde 3-phosphate and glycerone phosphate from D-glucose: step 4/4. This is Fructose-bisphosphate aldolase, cytoplasmic isozyme 2 from Pisum sativum (Garden pea).